A 1149-amino-acid chain; its full sequence is Potassium channel subfamily U member 1 (1149 aa).

Over 1 to 24 (MFQTKLRNESWEDLQKMSCTTEIQ) the chain is Extracellular. Residues 25–45 (VAFILSSFMTFISGLIILLIF) traverse the membrane as a helical segment. At 46–101 (RLIWRTVKKWQIIKGTGIILELFTSGSIRRNHVRSLHFHGRFRDRIEMLLSAQTFV) the chain is on the cytoplasmic side. A helical membrane pass occupies residues 102–122 (GQVLVILVFVLSIGSLIIYFI). Residues 123 to 138 (NSADPVGSCSSYEDKT) lie on the Extracellular side of the membrane. A helical transmembrane segment spans residues 139-159 (IPVDLVFNAFFSFYFGLRFMA). Topologically, residues 160–163 (ADDK) are cytoplasmic. A helical membrane pass occupies residues 164-184 (IKFWLEMNSIVDIFTIPPTFI). Residues 185 to 188 (SYYL) lie on the Extracellular side of the membrane. Residues 189 to 209 (KSNWLGLRFLRALRLLELPRI) form a helical; Voltage-sensor membrane-spanning segment. Topologically, residues 210–226 (LQILRAIKTSNSVKFSK) are cytoplasmic. A helical transmembrane segment spans residues 227–247 (LLSIVLSTWFTAAGFIHLVEN). Residues 248–259 (SGDPWLKGRNSQ) are Extracellular-facing. The pore-forming intramembrane region spans 260 to 282 (NISYFDSVYLVMATTSTVGFGDV). A Selectivity for potassium motif is present at residues 276–279 (TVGF). At 283-291 (VAKTSLGRT) the chain is on the extracellular side. The chain crosses the membrane as a helical span at residues 292-312 (FIIFFTLGSLILFANYIPEMV). The Cytoplasmic segment spans residues 313-1149 (ELFANKRKYT…EDPFAYSEPL (837 aa)). RCK N-terminal domains are found at residues 331–473 (KKFI…DNII) and 713–884 (RNHI…EGSL). A compositionally biased stretch (low complexity) spans 829 to 845 (IDSSSDSSPSVSEETAS). 2 disordered regions span residues 829 to 851 (IDSSSDSSPSVSEETASCTNGHN) and 1106 to 1149 (ARNQ…SEPL). A compositionally biased stretch (polar residues) spans 1106 to 1120 (ARNQIRTNSSITSQK).

Belongs to the potassium channel family. Calcium-activated (TC 1.A.1.3) subfamily. KCa5.1/KCNU1 sub-subfamily. As to quaternary structure, homotetramer; which constitutes the calcium-activated potassium channel. Interacts with LRRC52; this interaction changes some channel gating properties, such as shifting gating to more negative potentials at a given pH. As to expression, testis-specific.

The protein resides in the cell membrane. It is found in the cell projection. It localises to the cilium. Its subcellular location is the flagellum membrane. It catalyses the reaction K(+)(in) = K(+)(out). Its activity is regulated as follows. Regulated by changes in cytosolic pH; activated by alkalization. VU0546110 acts as a selective inhibitor. The auxiliary subunit LRRC52 shifts the activation of KCNU1 to more negative potentials at a given pH. Testis-specific potassium channel activated by both intracellular pH and membrane voltage that mediates export of K(+). Represents the primary spermatozoan K(+) current. The channel underlies a pH-triggered membrane hyperpolarization during the process of sperm capacitation, as sperm encounter the alkaline environment near the ovum in the female reproductive tract, thereby playing an essential for male fertility. This is Potassium channel subfamily U member 1 (KCNU1) from Macaca fascicularis (Crab-eating macaque).